We begin with the raw amino-acid sequence, 309 residues long: Taste receptor type 2 member 46 (309 aa).

A topological domain (extracellular) is located at residue Met1. A helical transmembrane segment spans residues 2–22; sequence ITFLPITFSILIVVIFFIGNF. At 23–46 the chain is on the cytoplasmic side; that stretch reads ANGFIALINSIEWVKRQKISFAGQ. The helical transmembrane segment at 47–67 threads the bilayer; it reads ILTALAVSRVGLLWVLSLHWY. Residues 68-86 lie on the Extracellular side of the membrane; that stretch reads ATEFNLAFHSVEVRSTAYN. The chain crosses the membrane as a helical span at residues 87 to 107; that stretch reads VWVVTNHFSNWLSTSLSMFYL. Residues 108–126 are Cytoplasmic-facing; the sequence is LRIATFSNLIFLHLNRRVK. Residues 127-147 traverse the membrane as a helical segment; that stretch reads SVILVTLLGPLLFLVCQLFVM. Topologically, residues 148–178 are extracellular; the sequence is NMNQIVRTKEYEGNMTWKIKLKSAMYLSNTT. Asn161 and Asn176 each carry an N-linked (GlcNAc...) asparagine glycan. Residues 179 to 199 traverse the membrane as a helical segment; the sequence is VAMLANFVPLTLTLISFLLLI. The Cytoplasmic portion of the chain corresponds to 200 to 229; it reads CSLCKHLKKMRVHGKGSQDPSTKVHTKALQ. A helical transmembrane segment spans residues 230-250; sequence IVTSFLLVCAIYFLSIILSVW. The Extracellular segment spans residues 251–259; the sequence is NSGGLENKP. A helical membrane pass occupies residues 260–280; the sequence is FFMFCQAIKFSYPSTHPFILI. Residues 281–309 lie on the Cytoplasmic side of the membrane; it reads WGNKTLKQTFLSVLRNVRYWVKGQKPSSP.

Belongs to the G-protein coupled receptor T2R family.

Its subcellular location is the membrane. It is found in the cell projection. The protein localises to the cilium membrane. Functionally, receptor that may play a role in the perception of bitterness and is gustducin-linked. May play a role in sensing the chemical composition of the gastrointestinal content. The activity of this receptor may stimulate alpha gustducin, mediate PLC-beta-2 activation and lead to the gating of TRPM5. In airway epithelial cells, binding of bitter compounds increases the intracellular calcium ion concentration and stimulates ciliary beat frequency. This Papio hamadryas (Hamadryas baboon) protein is Taste receptor type 2 member 46 (TAS2R46).